The chain runs to 632 residues: 2-hydroxyacyl-CoA lyase 2 (632 aa).

A helical transmembrane segment spans residues 13–33; it reads LFPSFLLLACGTLVAALLGAA. Glu-98 contacts thiamine diphosphate. The segment at 470 to 550 is thiamine pyrophosphate binding; that stretch reads DFVGTAAHLV…VMALVGNDAG (81 aa). Asp-521 and Asn-547 together coordinate Mg(2+).

Belongs to the TPP enzyme family. Mg(2+) serves as cofactor. It depends on thiamine diphosphate as a cofactor. Expressed in all tissues tested, with highest expression in heart, pancreas and placenta.

Its subcellular location is the endoplasmic reticulum membrane. The enzyme catalyses 2-hydroxyoctadecanoyl-CoA = heptadecanal + formyl-CoA. The catalysed reaction is (2R)-hydroxyhexadecanoyl-CoA = pentadecanal + formyl-CoA. Endoplasmic reticulum 2-OH acyl-CoA lyase involved in the cleavage (C1 removal) reaction in the fatty acid alpha-oxydation in a thiamine pyrophosphate (TPP)-dependent manner. Involved in the phytosphingosine degradation pathway. In Homo sapiens (Human), this protein is 2-hydroxyacyl-CoA lyase 2.